Reading from the N-terminus, the 397-residue chain is Acetate kinase 2 (397 aa).

Asn-8 contacts Mg(2+). Residue Lys-15 participates in ATP binding. Position 89 (Arg-89) interacts with substrate. Asp-146 serves as the catalytic Proton donor/acceptor. Residues His-206–Gly-210, Asp-281–Arg-283, and Gly-329–Asn-333 contribute to the ATP site. Residue Glu-382 participates in Mg(2+) binding.

Belongs to the acetokinase family. As to quaternary structure, homodimer. Mg(2+) serves as cofactor. Mn(2+) is required as a cofactor.

The protein resides in the cytoplasm. The enzyme catalyses acetate + ATP = acetyl phosphate + ADP. Its pathway is metabolic intermediate biosynthesis; acetyl-CoA biosynthesis; acetyl-CoA from acetate: step 1/2. Catalyzes the formation of acetyl phosphate from acetate and ATP. Can also catalyze the reverse reaction. In Listeria monocytogenes serotype 4b (strain F2365), this protein is Acetate kinase 2.